A 313-amino-acid polypeptide reads, in one-letter code: MIREPYFHQFALAELLPFFEQFPTQYLSGKRNIKLAYRHLIQPESAVRKLMILVNGRAENMLKWSELAYDFYHQGYDVLLFDHRGQGYSQRIIPQKGHLDEFRFYVDDMAKIIEKVTALFSYSTQHLLAHSMGALIATYYLANYDHHINKAVLSSPFYGILLKHPIRDELIITLMNILGQGERYVFGKGAYQQAHLEYNELTFCKTRMKWMNRINRKNPAINLGGPTFRWVHLCLNAIKRLPKVIPKIEIPILILQAEKEKIVDNKNLEKLTALFPNARCEVILNAKHEVLFEKDNVRRNVLKSVNHFLNVQS.

The protein resides in the cell inner membrane. The catalysed reaction is a 1-acyl-sn-glycero-3-phosphocholine + H2O = sn-glycerol 3-phosphocholine + a fatty acid + H(+). This chain is Probable lysophospholipase L2 (pldB), found in Haemophilus influenzae (strain ATCC 51907 / DSM 11121 / KW20 / Rd).